A 525-amino-acid polypeptide reads, in one-letter code: Sensory neuron membrane protein 1 (525 aa).

Residues 1 to 11 lie on the Cytoplasmic side of the membrane; it reads MLLPKPLKYAA. The chain crosses the membrane as a helical span at residues 12 to 32; that stretch reads IGGGVFVFGILIGWVIFPVIL. The Extracellular segment spans residues 33–456; sequence KSQIKKEMAL…LKHQLFIPKR (424 aa). 3 N-linked (GlcNAc...) asparagine glycosylation sites follow: Asn67, Asn105, and Asn229. 3 disulfides stabilise this stretch: Cys268-Cys333, Cys297-Cys352, and Cys335-Cys341. Residue Asn440 is glycosylated (N-linked (GlcNAc...) asparagine). The helical transmembrane segment at 457–477 threads the bilayer; that stretch reads IVGVIRWWMVSFGLIAVLAGV. Over 478-525 the chain is Cytoplasmic; the sequence is MYHFKDNIMGWAAKGESTTAKVNPEDGSNEQRGVSVIGQDREPPKVTM. The tract at residues 496–525 is disordered; that stretch reads TAKVNPEDGSNEQRGVSVIGQDREPPKVTM. Residues 516–525 show a composition bias toward basic and acidic residues; it reads QDREPPKVTM.

It belongs to the CD36 family. As to expression, principal component of the olfactory cilia membrane. Localizes to the somata, dendritic neck and cilia of the olfactory neurons (at protein level). Not detected in the axons of ORNs, the cytoplasm of auxiliary cells or non-sensory structures. Expression is universal among ORNs but differential between neuron and sensillum types.

It is found in the cell membrane. Plays an olfactory role that is not restricted to pheromone sensitivity. May be involved in the odor detection properties of the olfactory receptor neurons (ORNs) rather than their differentiation and growth. The protein is Sensory neuron membrane protein 1 of Antheraea polyphemus (Polyphemus moth).